Reading from the N-terminus, the 253-residue chain is Triosephosphate isomerase (253 aa).

9-11 provides a ligand contact to substrate; the sequence is NWK. His-95 functions as the Electrophile in the catalytic mechanism. The Proton acceptor role is filled by Glu-167. Substrate is bound by residues Gly-173, Ser-213, and 234-235; that span reads GG. Ser-213 is subject to Phosphoserine.

This sequence belongs to the triosephosphate isomerase family. As to quaternary structure, homodimer.

The protein localises to the cytoplasm. It catalyses the reaction D-glyceraldehyde 3-phosphate = dihydroxyacetone phosphate. It functions in the pathway carbohydrate biosynthesis; gluconeogenesis. It participates in carbohydrate degradation; glycolysis; D-glyceraldehyde 3-phosphate from glycerone phosphate: step 1/1. Involved in the gluconeogenesis. Catalyzes stereospecifically the conversion of dihydroxyacetone phosphate (DHAP) to D-glyceraldehyde-3-phosphate (G3P). The protein is Triosephosphate isomerase of Bacillus pumilus (strain SAFR-032).